Reading from the N-terminus, the 289-residue chain is 3-methyl-2-oxobutanoate hydroxymethyltransferase (289 aa).

A compositionally biased stretch (low complexity) spans 1–10; it reads MSDSKSSAST. The segment at 1-33 is disordered; sequence MSDSKSSASTSEDRLYGSAPSHDVPKRKTRTHH. Residues Asp70 and Asp109 each contribute to the Mg(2+) site. 3-methyl-2-oxobutanoate contacts are provided by residues 70–71, Asp109, and Lys139; that span reads DS. Glu141 is a Mg(2+) binding site. The Proton acceptor role is filled by Glu207.

This sequence belongs to the PanB family. As to quaternary structure, homodecamer; pentamer of dimers. Mg(2+) serves as cofactor.

Its subcellular location is the cytoplasm. It carries out the reaction 3-methyl-2-oxobutanoate + (6R)-5,10-methylene-5,6,7,8-tetrahydrofolate + H2O = 2-dehydropantoate + (6S)-5,6,7,8-tetrahydrofolate. Its pathway is cofactor biosynthesis; (R)-pantothenate biosynthesis; (R)-pantoate from 3-methyl-2-oxobutanoate: step 1/2. In terms of biological role, catalyzes the reversible reaction in which hydroxymethyl group from 5,10-methylenetetrahydrofolate is transferred onto alpha-ketoisovalerate to form ketopantoate. The protein is 3-methyl-2-oxobutanoate hydroxymethyltransferase of Rhodococcus jostii (strain RHA1).